The sequence spans 867 residues: Cilium assembly protein DZIP1 (867 aa).

The segment at 12–203 (MPFQKHVYYP…KANYYQCHFC (192 aa)) is mediates interaction with PCM1. The interval 12-367 (MPFQKHVYYP…QDFHNVMQLL (356 aa)) is mediates interaction with GLI3 and localization to the cilium basal body. The segment at 154–278 (CDGEQSKKLL…SKEYEMQKTK (125 aa)) is required for interaction with DAZ1. The C2H2-type zinc-finger motif lies at 198 to 221 (YQCHFCDKAFMNQAFLQSHIQRRH). S226 carries the post-translational modification Phosphoserine; by PLK1. Coiled coils occupy residues 230-340 (YQKN…KSNI), 401-445 (TSMI…FTCN), and 568-588 (DQLH…EREI). The segment at 446 to 617 (PLNSISEPKG…EKALLSSDQC (172 aa)) is mediates interaction with GDI2 and RAB8A. 3 stretches are compositionally biased toward polar residues: residues 643–654 (LIRQKAVSTDRT), 671–680 (KSSTITTPPF), and 708–718 (NKGSFGKNTVK). Disordered regions lie at residues 643–768 (LIRQ…GGTN) and 796–867 (SLEE…TSDV). Acidic residues predominate over residues 722–733 (DGTEGSEIEDTD). Over residues 807-823 (SGKEQKEPPPAKNEPHF) the composition is skewed to basic and acidic residues. The span at 848–859 (SSTLKSSLVTVT) shows a compositional bias: low complexity.

It belongs to the DZIP C2H2-type zinc-finger protein family. Interacts with DAZ1. Interacts with the BBSome; recruits the BBSome to centriolar satellites of the cilium. Interacts with PCM1; localizes DZIP1 and the associated BBSome to centriolar satellites. Interacts with RAB8A (GDP-bound inactive form); recruits RAB8A to the basal body of the cilium and prevents its inhibition by GDI2. Interacts with GDI2; negatively regulates the interaction of GDI2 with GDP-bound RAB8A. Interacts with GLI3; retains GLI3 within the cytoplasm. Interacts with CEP164. Interacts with IFT88. Post-translationally, phosphorylation at Ser-226 by PLK1 before mitosis prevents interaction with PCM1 and localization to centriolar satellites. Thereby, it negatively regulates the localization of the BBSome to centriolar satellites. In terms of tissue distribution, predominantly expressed in testis (at protein level). Also expressed in fetal brain, adult oocytes and ovary. Expressed in undifferentiated ES cells. In testis, it is specifically expressed in germ cells (at protein level). Expressed in mature germ cells and secondary spermatocytes, while it is weakly or not expressed in primary spermatocytes.

The protein resides in the cytoplasm. Its subcellular location is the cytoskeleton. It localises to the cilium basal body. It is found in the microtubule organizing center. The protein localises to the centrosome. The protein resides in the centriolar satellite. Its subcellular location is the centriole. It localises to the nucleus. It is found in the nucleus speckle. In terms of biological role, molecular adapter that recruits protein complexes required for cilium assembly and function to the cilium basal body. At the exit of mitosis, localizes to the basal body and ciliary base of the forming primary cilium where it recruits and activates RAB8A to direct vesicle-mediated transport of proteins to the cilium. Also recruits the BBSome, a complex involved in cilium biogenesis, by bridging it to PCM1 at the centriolar satellites of the cilium. It is also required for the recruitment to the cilium basal body of the intraflagellar transport (IFT) machinery as well as the ciliary appendage proteins CEP164 and NINEIN. Functions as a regulator of Hedgehog signaling both through its role in cilium assembly but also probably through its ability to retain GLI3 within the cytoplasm. It is involved in spermatogenesis through its role in organization of the basal body and assembly of the sperm flagellum. Also indirectly involved in heart development through its function in ciliogenesis. This Homo sapiens (Human) protein is Cilium assembly protein DZIP1.